We begin with the raw amino-acid sequence, 698 residues long: Protein CRAC (698 aa).

Residues 22 to 122 form the PH domain; the sequence is DVSYSSIMKK…FLTLLIARIR (101 aa). The segment at 594-630 is disordered; it reads TGGGSVPSSQSTNNLQSSTSSMSSLSSSSTSTTKRSH. Positions 601–626 are enriched in low complexity; the sequence is SSQSTNNLQSSTSSMSSLSSSSTSTT.

The protein resides in the cytoplasm. In terms of biological role, couples activated G protein to adenylyl cyclase signal transduction from surface cAMP receptor. Pianissimo a cytosolic regulator and CRAC, are both essential for activation of the enzyme adenylyl cyclase. Pianissimo and CRAC do not function redundantly. Both proteins are integral components of the adenylyl cyclase activation pathway. The chain is Protein CRAC (dagA) from Dictyostelium discoideum (Social amoeba).